Consider the following 298-residue polypeptide: 4-hydroxy-tetrahydrodipicolinate synthase (298 aa).

Threonine 48 provides a ligand contact to pyruvate. The Proton donor/acceptor role is filled by tyrosine 137. The active-site Schiff-base intermediate with substrate is lysine 166. Isoleucine 207 is a binding site for pyruvate.

This sequence belongs to the DapA family. Homotetramer; dimer of dimers.

The protein localises to the cytoplasm. It carries out the reaction L-aspartate 4-semialdehyde + pyruvate = (2S,4S)-4-hydroxy-2,3,4,5-tetrahydrodipicolinate + H2O + H(+). It functions in the pathway amino-acid biosynthesis; L-lysine biosynthesis via DAP pathway; (S)-tetrahydrodipicolinate from L-aspartate: step 3/4. In terms of biological role, catalyzes the condensation of (S)-aspartate-beta-semialdehyde [(S)-ASA] and pyruvate to 4-hydroxy-tetrahydrodipicolinate (HTPA). The chain is 4-hydroxy-tetrahydrodipicolinate synthase from Campylobacter jejuni subsp. doylei (strain ATCC BAA-1458 / RM4099 / 269.97).